A 390-amino-acid chain; its full sequence is GTPase Obg (390 aa).

The Obg domain occupies 1-159 (MKFVDEASIL…RDLLLELMLL (159 aa)). Residues 127–147 (NTRFKSSVNRTPRQKTNGTPG) are disordered. Over residues 129–145 (RFKSSVNRTPRQKTNGT) the composition is skewed to polar residues. Residues 160–333 (ADVGMLGMPN…LCWDVMTFII (174 aa)) form the OBG-type G domain. GTP is bound by residues 166–173 (GMPNAGKS), 191–195 (FTTLV), 213–216 (DIPG), 283–286 (NKID), and 314–316 (SAA). 2 residues coordinate Mg(2+): Ser-173 and Thr-193.

The protein belongs to the TRAFAC class OBG-HflX-like GTPase superfamily. OBG GTPase family. In terms of assembly, monomer. Mg(2+) serves as cofactor.

It localises to the cytoplasm. In terms of biological role, an essential GTPase which binds GTP, GDP and possibly (p)ppGpp with moderate affinity, with high nucleotide exchange rates and a fairly low GTP hydrolysis rate. Plays a role in control of the cell cycle, stress response, ribosome biogenesis and in those bacteria that undergo differentiation, in morphogenesis control. In Salmonella paratyphi A (strain ATCC 9150 / SARB42), this protein is GTPase Obg.